The following is a 462-amino-acid chain: Cysteine--tRNA ligase (462 aa).

Zn(2+) is bound at residue cysteine 29. The 'HIGH' region motif lies at 31–41 (MTVYDLCHLGH). Zn(2+) contacts are provided by cysteine 217, histidine 242, and glutamate 246. A 'KMSKS' region motif is present at residues 274-278 (KMSKS). Lysine 277 serves as a coordination point for ATP.

This sequence belongs to the class-I aminoacyl-tRNA synthetase family. As to quaternary structure, monomer. The cofactor is Zn(2+).

The protein localises to the cytoplasm. The enzyme catalyses tRNA(Cys) + L-cysteine + ATP = L-cysteinyl-tRNA(Cys) + AMP + diphosphate. This chain is Cysteine--tRNA ligase, found in Polaromonas sp. (strain JS666 / ATCC BAA-500).